We begin with the raw amino-acid sequence, 446 residues long: Forkhead box protein F2 (446 aa).

Positions Met1–Pro18 are enriched in pro residues. Residues Met1–Arg97 are disordered. Over residues Ser45–Ser78 the composition is skewed to low complexity. The segment at residues Lys100–Arg194 is a DNA-binding region (fork-head). Disordered stretches follow at residues Ala257–Pro278, Gly304–Met325, and Ala340–Pro371. The span at Ala263–Pro274 shows a compositional bias: basic residues. Low complexity predominate over residues Gly311 to Met325.

Interacts with the transcription factors TBP and TFIIB. As to expression, uniquely expressed in the bronchiolar epithelium and in type II pneumocytes.

Its subcellular location is the nucleus. Probable transcription activator for a number of lung-specific genes. Mediates up-regulation of the E3 ligase IRF2BPL and drives ubiquitination and degradation of CTNNB1. This is Forkhead box protein F2 (Foxf2) from Mus musculus (Mouse).